A 281-amino-acid polypeptide reads, in one-letter code: 4-deoxy-L-threo-5-hexosulose-uronate ketol-isomerase (281 aa).

4 residues coordinate Zn(2+): His198, His200, Glu205, and His248.

It belongs to the KduI family. It depends on Zn(2+) as a cofactor.

The enzyme catalyses 5-dehydro-4-deoxy-D-glucuronate = 3-deoxy-D-glycero-2,5-hexodiulosonate. It participates in glycan metabolism; pectin degradation; 2-dehydro-3-deoxy-D-gluconate from pectin: step 4/5. Catalyzes the isomerization of 5-dehydro-4-deoxy-D-glucuronate to 3-deoxy-D-glycero-2,5-hexodiulosonate. The protein is 4-deoxy-L-threo-5-hexosulose-uronate ketol-isomerase of Lacticaseibacillus casei (strain BL23) (Lactobacillus casei).